The sequence spans 180 residues: Large ribosomal subunit protein uL5 (180 aa).

It belongs to the universal ribosomal protein uL5 family. In terms of assembly, part of the 50S ribosomal subunit; part of the 5S rRNA/L5/L18/L25 subcomplex. Contacts the 5S rRNA and the P site tRNA. Forms a bridge to the 30S subunit in the 70S ribosome.

Its function is as follows. This is one of the proteins that bind and probably mediate the attachment of the 5S RNA into the large ribosomal subunit, where it forms part of the central protuberance. In the 70S ribosome it contacts protein S13 of the 30S subunit (bridge B1b), connecting the 2 subunits; this bridge is implicated in subunit movement. Contacts the P site tRNA; the 5S rRNA and some of its associated proteins might help stabilize positioning of ribosome-bound tRNAs. The sequence is that of Large ribosomal subunit protein uL5 from Streptococcus thermophilus (strain ATCC BAA-491 / LMD-9).